Consider the following 783-residue polypeptide: Rho GTPase-activating protein gacR (783 aa).

The stretch at 138-188 (AKNRFDKARLSFDEASEQFKQLRKKQNNINNEKLLEAEEDLDYATQQFSDI) forms a coiled coil. Positions 262–299 (QFEQTNSSRTISLPPPPPPKPTSSTPSSSPSPSPSSSI) are disordered. Positions 283 to 299 (TSSTPSSSPSPSPSSSI) are enriched in low complexity. The Rho-GAP domain maps to 319-509 (MALSTITERE…FIISNFNNIF (191 aa)). Over residues 527–539 (GSSGGGGGGGSSG) the composition is skewed to gly residues. The tract at residues 527 to 745 (GSSGGGGGGG…TTNSRPLSNS (219 aa)) is disordered. 4 stretches are compositionally biased toward low complexity: residues 568–589 (SVNT…ASSA), 599–630 (PSSS…NINP), 641–651 (PKKISSSSNSL), and 661–698 (SIPE…RSST). The segment covering 706–738 (NRVSMYLQNSNTGVPLPSQKPQRVISNNNTTTN) has biased composition (polar residues).

It is found in the cytoplasm. In terms of biological role, rho GTPase-activating protein involved in the signal transduction pathway. The polypeptide is Rho GTPase-activating protein gacR (gacR) (Dictyostelium discoideum (Social amoeba)).